The sequence spans 271 residues: Phosphonates import ATP-binding protein PhnC 2 (271 aa).

An ABC transporter domain is found at 2–245; sequence LVVEGLTCRF…IARELYDLEA (244 aa). Residue 34–41 coordinates ATP; the sequence is GRSGAGKS.

The protein belongs to the ABC transporter superfamily. Phosphonates importer (TC 3.A.1.9.1) family. In terms of assembly, the complex is composed of two ATP-binding proteins (PhnC), two transmembrane proteins (PhnE) and a solute-binding protein (PhnD).

The protein localises to the cell inner membrane. It catalyses the reaction phosphonate(out) + ATP + H2O = phosphonate(in) + ADP + phosphate + H(+). Part of the ABC transporter complex PhnCDE involved in phosphonates import. Responsible for energy coupling to the transport system. The protein is Phosphonates import ATP-binding protein PhnC 2 of Rhodopseudomonas palustris (strain BisB18).